Consider the following 201-residue polypeptide: Lipopolysaccharide core heptose(II)-phosphate phosphatase (201 aa).

Positions 1 to 35 (MLAFTLRFIKNKRYLATLAGALVIIAGLTSQHAWS) are cleaved as a signal peptide.

This sequence belongs to the phosphoglycerate mutase family. Ais subfamily.

It localises to the periplasm. It functions in the pathway bacterial outer membrane biogenesis; lipopolysaccharide metabolism. Its function is as follows. Catalyzes the dephosphorylation of heptose(II) of the outer membrane lipopolysaccharide core. The chain is Lipopolysaccharide core heptose(II)-phosphate phosphatase from Salmonella newport (strain SL254).